The following is a 191-amino-acid chain: Rho-related GTP-binding protein RhoH (191 aa).

11-18 contacts GTP; that stretch reads GDSAVGKT. An Effector region motif is present at residues 33–41; that stretch reads YKPTVYENT. 58-62 lines the GTP pocket; that stretch reads DTAGN. Residues 73-86 form an interaction with ZAP70 region; it reads YQQADVVLMCYSVA. 116–119 provides a ligand contact to GTP; that stretch reads TQTD. Position 188 is a cysteine methyl ester (Cys-188). Cys-188 carries the S-geranylgeranyl cysteine lipid modification. The propeptide at 189 to 191 is removed in mature form; it reads KIF.

It belongs to the small GTPase superfamily. Rho family. As to quaternary structure, interacts with GDI1 and GDI2. Interacts with ZAP70 (via SH2 domains) and the interaction is enhanced by its phosphorylation by LCK. Interacts with SYK and the interaction is enhanced by its phosphorylation by FYN. In terms of processing, phosphorylated on tyrosine by LCK. Phosphorylated by FYN. Phosphorylation enhances the interactions with ZAP70 and SYK and is critical for its function in thymocyte development. In terms of tissue distribution, expression is widespread in hematopoietic cells, including in bone marrow progenitor cells and in differentiated myeloid as well as lymphoid cells. Expressed at high levels in the thymus and mast cells, found in spleen and low-density bone marrow (LDBM) cells and is detected at a low level in neutrophils. In the thymus it is detected in thymocytes of the thymic cortex but not in non-lymphoid cells of fibrovascular and fibroadipose tissues. Expressed in T-cells, B-cells and mast cells.

It is found in the cytoplasm. The protein localises to the cell membrane. Functionally, binds GTP but lacks intrinsic GTPase activity and is resistant to Rho-specific GTPase-activating proteins. Inhibits the activation of NF-kappa-B by TNF and IKKB and the activation of CRK/p38 by TNF. Inhibits activities of RAC1, RHOA and CDC42. Negatively regulates leukotriene production in neutrophils. Negative regulator of hematopoietic progenitor cell proliferation, survival and migration. Critical regulator of thymocyte development and T-cell antigen receptor (TCR) signaling by mediating recruitment and activation of ZAP70. Required for phosphorylation of CD3Z, membrane translocation of ZAP70 and subsequent activation of the ZAP70-mediated pathways. Essential for efficient beta-selection and positive selection by promoting the ZAP70-dependent phosphorylation of the LAT signalosome during pre-TCR and TCR signaling. Crucial for thymocyte maturation during DN3 to DN4 transition and during positive selection. Plays critical roles in mast cell function by facilitating phosphorylation of SYK in Fc epsilon RI-mediated signal transduction. Essential for the phosphorylation of LAT, LCP2, PLCG1 and PLCG2 and for Ca(2+) mobilization in mast cells. This Mus musculus (Mouse) protein is Rho-related GTP-binding protein RhoH (Rhoh).